We begin with the raw amino-acid sequence, 237 residues long: MSDADVSKQIQQMVRFIRQEAEEKANEISVSAEEEFNIEKLQLVEAEKKKIRQEYEKKEKQVEIRKKIEYSMQLNASRIKVLQAQDDVVNAMKESASKDFLNVSHDHHVYKRLLKDLIVQSLVRLKEPGVLLRCRKEDLHLVESVLDSAKEEYASKVNVHPPEIIVDDVHLPPGPSHHHGFFHHHAEAHGPFCSGGVVIASRDGKIVFENTLDARLDVAFNKKLPEIRKWLFGQVAA.

Belongs to the V-ATPase E subunit family. In terms of assembly, V-ATPase is a heteromultimeric enzyme composed of a peripheral catalytic V1 complex (components A to H) attached to an integral membrane V0 proton pore complex (components: a, c, c', c'' and d).

Its function is as follows. Subunit of the peripheral V1 complex of vacuolar ATPase essential for assembly or catalytic function. V-ATPase is responsible for acidifying a variety of intracellular compartments in eukaryotic cells. In Gossypium hirsutum (Upland cotton), this protein is V-type proton ATPase subunit E (VATE).